A 150-amino-acid polypeptide reads, in one-letter code: Translation machinery-associated protein 17 (150 aa).

2 positions are modified to phosphoserine: serine 24 and serine 68. The tract at residues 110–139 is disordered; the sequence is RKTGHGKSKHEVEAKDNTNKGPDVDMDNSN. Residues 118–127 show a composition bias toward basic and acidic residues; sequence KHEVEAKDNT.

Interacts with RPT6. Interacts with the 40S and 60S ribosomal subunits.

The protein resides in the cytoplasm. The protein localises to the nucleus. Its function is as follows. ATPase-dedicated chaperone that assists the formation of the RPT6-RPT3 ATPase pair, an early step in proteasome assembly. Plays a key role in maintaining homeostatic proteasome levels and adjusting proteasome assembly when demands increase, such as during proteasome stresses. Function overlaps with RPN14. The protein is Translation machinery-associated protein 17 (TMA17) of Saccharomyces cerevisiae (strain ATCC 204508 / S288c) (Baker's yeast).